Reading from the N-terminus, the 432-residue chain is Serine/threonine-protein phosphatase 2A activator 1 (432 aa).

The protein belongs to the PTPA-type PPIase family.

Its subcellular location is the cytoplasm. The protein localises to the nucleus. The enzyme catalyses [protein]-peptidylproline (omega=180) = [protein]-peptidylproline (omega=0). PPIases accelerate the folding of proteins. It catalyzes the cis-trans isomerization of proline imidic peptide bonds in oligopeptides. Acts as a regulatory subunit for PP2A-like phosphatases modulating their activity or substrate specificity, probably by inducing a conformational change in the catalytic subunit, a direct target of the PPIase. Can reactivate inactive phosphatase PP2A-phosphatase methylesterase complexes (PP2Ai) in presence of ATP and Mg(2+) by dissociating the inactive form from the complex. This is Serine/threonine-protein phosphatase 2A activator 1 (rrd1) from Emericella nidulans (strain FGSC A4 / ATCC 38163 / CBS 112.46 / NRRL 194 / M139) (Aspergillus nidulans).